The chain runs to 328 residues: Acetaldehyde dehydrogenase 3 (328 aa).

17–20 lines the NAD(+) pocket; it reads SGNI. Cys-135 serves as the catalytic Acyl-thioester intermediate. Residues 166-174 and Asn-298 each bind NAD(+); that span reads SAGPGTRAN.

The protein belongs to the acetaldehyde dehydrogenase family.

It carries out the reaction acetaldehyde + NAD(+) + CoA = acetyl-CoA + NADH + H(+). The polypeptide is Acetaldehyde dehydrogenase 3 (Nocardia farcinica (strain IFM 10152)).